The primary structure comprises 378 residues: Quinolinate synthase (378 aa).

Positions 59 and 80 each coordinate iminosuccinate. Cysteine 125 is a [4Fe-4S] cluster binding site. Iminosuccinate contacts are provided by residues 151-153 (YAN) and serine 168. Cysteine 212 contributes to the [4Fe-4S] cluster binding site. Iminosuccinate-binding positions include 238–240 (HPE) and threonine 255. [4Fe-4S] cluster is bound at residue cysteine 309.

The protein belongs to the quinolinate synthase family. Type 1 subfamily. It depends on [4Fe-4S] cluster as a cofactor.

It is found in the cytoplasm. The catalysed reaction is iminosuccinate + dihydroxyacetone phosphate = quinolinate + phosphate + 2 H2O + H(+). It functions in the pathway cofactor biosynthesis; NAD(+) biosynthesis; quinolinate from iminoaspartate: step 1/1. In terms of biological role, catalyzes the condensation of iminoaspartate with dihydroxyacetone phosphate to form quinolinate. This chain is Quinolinate synthase, found in Burkholderia lata (strain ATCC 17760 / DSM 23089 / LMG 22485 / NCIMB 9086 / R18194 / 383).